The following is a 380-amino-acid chain: Cytochrome b (380 aa).

4 consecutive transmembrane segments (helical) span residues 34–54 (FGSLLGLCLMTQILTGLLLAM), 78–99 (WLIRNLHANGASFFFICIYLHI), 114–134 (WNTGVILLLTLMATAFVGYVL), and 179–199 (FFALHFLLPFMIAGLTLIHLT). Residues H84 and H98 each coordinate heme b. Heme b is bound by residues H183 and H197. H202 lines the a ubiquinone pocket. Transmembrane regions (helical) follow at residues 227–247 (TKDLLGFLLMIAPLLTLAMFS), 289–309 (LGGVLALAASVLILFLAPFLH), 321–341 (LSQLLFWILVANLLILTWVGS), and 348–368 (FIIIGQIASLTYFTILLILFP).

It belongs to the cytochrome b family. The cytochrome bc1 complex contains 11 subunits: 3 respiratory subunits (MT-CYB, CYC1 and UQCRFS1), 2 core proteins (UQCRC1 and UQCRC2) and 6 low-molecular weight proteins (UQCRH/QCR6, UQCRB/QCR7, UQCRQ/QCR8, UQCR10/QCR9, UQCR11/QCR10 and a cleavage product of UQCRFS1). This cytochrome bc1 complex then forms a dimer. Requires heme b as cofactor.

Its subcellular location is the mitochondrion inner membrane. In terms of biological role, component of the ubiquinol-cytochrome c reductase complex (complex III or cytochrome b-c1 complex) that is part of the mitochondrial respiratory chain. The b-c1 complex mediates electron transfer from ubiquinol to cytochrome c. Contributes to the generation of a proton gradient across the mitochondrial membrane that is then used for ATP synthesis. This chain is Cytochrome b (MT-CYB), found in Amazilia tzacatl (Rufous-tailed hummingbird).